A 552-amino-acid chain; its full sequence is Elongator complex protein 3 (552 aa).

One can recognise a Radical SAM core domain in the interval Arg-84–Pro-374. Positions 101, 111, and 114 each coordinate [4Fe-4S] cluster. Residues Lys-166, Glu-476–Val-479, Phe-499–Met-501, and Tyr-532 each bind acetyl-CoA. The 155-residue stretch at Thr-398–Asn-552 folds into the N-acetyltransferase domain.

It belongs to the ELP3 family. In terms of assembly, component of the elongator complex composed of Elp1, Elp2, Elp3, Elp4, Elp5 and Elp6. The elongator complex associates with and stabilizes microtubules; efficient interaction requires the full complex. [4Fe-4S] cluster is required as a cofactor.

It localises to the cytoplasm. The protein resides in the nucleus. It is found in the cytoskeleton. Its subcellular location is the spindle. The enzyme catalyses uridine(34) in tRNA + acetyl-CoA + S-adenosyl-L-methionine + H2O = 5-(carboxymethyl)uridine(34) in tRNA + 5'-deoxyadenosine + L-methionine + CoA + 2 H(+). The protein operates within tRNA modification; 5-methoxycarbonylmethyl-2-thiouridine-tRNA biosynthesis. Its function is as follows. Catalytic tRNA acetyltransferase subunit of the elongator complex, which is required for multiple tRNA modifications, including mcm5U (5-methoxycarbonylmethyl uridine), mcm5s2U (5-methoxycarbonylmethyl-2-thiouridine), and ncm5U (5-carbamoylmethyl uridine). In the elongator complex, acts as a tRNA uridine(34) acetyltransferase by mediating formation of carboxymethyluridine in the wobble base at position 34 in tRNAs. Binding by the elongator complex stabilizes microtubules and promotes their growth. This induces central spindle asymmetry, promoting polarized signaling endosome trafficking during asymmetric cell division and cell fate assignation of sensory organ precursor cells. Plays a role in the control of synaptic bouton expansion. Required for larval development. Involved in protein synthesis-dependent long-term memory formation, probably as part of the elongator complex. This is Elongator complex protein 3 from Drosophila melanogaster (Fruit fly).